The chain runs to 77 residues: Putative defensin-like protein 30 (77 aa).

The first 26 residues, 1-26 (MASSSKCAFLVFLCMIVLLAPSEVHA), serve as a signal peptide directing secretion. 3 disulfides stabilise this stretch: C43-C63, C49-C72, and C53-C74.

This sequence belongs to the DEFL family.

The protein localises to the secreted. This is Putative defensin-like protein 30 from Arabidopsis thaliana (Mouse-ear cress).